The primary structure comprises 437 residues: Sorting nexin-30 (437 aa).

Disordered stretches follow at residues 1–44 (MAGG…PDLL) and 54–73 (LILP…SSSS). Thr-38 is modified (phosphothreonine). Ser-40 carries the post-translational modification Phosphoserine. Over residues 63-73 (AGTSSPASSSS) the composition is skewed to low complexity. Residues 89–210 (RDLFVIVDDP…IFLTAKDLNA (122 aa)) enclose the PX domain. Residues Arg-132, Gln-134, Lys-162, and Arg-176 each contribute to the a 1,2-diacyl-sn-glycero-3-phospho-(1D-myo-inositol-3-phosphate) site. In terms of domain architecture, BAR spans 234–437 (KLRTRPLEFA…PLLQEKQEAK (204 aa)).

It belongs to the sorting nexin family. In terms of assembly, heterodimer; heterodimerizes with SNX4.

The protein localises to the early endosome membrane. Its function is as follows. Involved in the regulation of endocytosis and in several stages of intracellular trafficking. Together with SNX4, involved in autophagosome assembly. In Homo sapiens (Human), this protein is Sorting nexin-30.